Here is a 215-residue protein sequence, read N- to C-terminus: Cytochrome b6 (215 aa).

A helical transmembrane segment spans residues 32–52; the sequence is IFYCLGGITLTCFLIQFATGF. Position 35 (cysteine 35) interacts with heme c. Residues histidine 86 and histidine 100 each coordinate heme b. 3 helical membrane passes run 90–110, 116–136, and 186–206; these read ASMM…TGGF, LTWV…VTGY, and LHTF…FLMI. Histidine 187 and histidine 202 together coordinate heme b.

It belongs to the cytochrome b family. PetB subfamily. In terms of assembly, the 4 large subunits of the cytochrome b6-f complex are cytochrome b6, subunit IV (17 kDa polypeptide, PetD), cytochrome f and the Rieske protein, while the 4 small subunits are PetG, PetL, PetM and PetN. The complex functions as a dimer. Heme b is required as a cofactor. The cofactor is heme c.

The protein localises to the cellular thylakoid membrane. Functionally, component of the cytochrome b6-f complex, which mediates electron transfer between photosystem II (PSII) and photosystem I (PSI), cyclic electron flow around PSI, and state transitions. In Synechococcus elongatus, this protein is Cytochrome b6.